The primary structure comprises 181 residues: MSILSLVTAPDPILKKVSSPVDTVNDSIRQLIDDMLETMYHNHGVGLAAPQVAVSKRIIVLDLSKVDIEEDNITNSEYKYPLFMVNPIVKAISNQTVTAKEGCLSLPKQAIEVSRYHEIQVTYLDYYNKLKTLNAAGWLARAIQHEVDHLDGILLVDYLSNLKKEATLNTLSKIKDAAYDK.

The Fe cation site is built by Cys103 and His145. Glu146 is a catalytic residue. His149 lines the Fe cation pocket.

Belongs to the polypeptide deformylase family. It depends on Fe(2+) as a cofactor.

It catalyses the reaction N-terminal N-formyl-L-methionyl-[peptide] + H2O = N-terminal L-methionyl-[peptide] + formate. Functionally, removes the formyl group from the N-terminal Met of newly synthesized proteins. Requires at least a dipeptide for an efficient rate of reaction. N-terminal L-methionine is a prerequisite for activity but the enzyme has broad specificity at other positions. This is Peptide deformylase from Orientia tsutsugamushi (strain Boryong) (Rickettsia tsutsugamushi).